We begin with the raw amino-acid sequence, 249 residues long: MADS-box transcription factor 17 (249 aa).

Residues 1-61 (MGRGRVELKR…GKLYEFGSAG (61 aa)) form the MADS-box domain. The region spanning 88–178 (HQSWYQEMSR…KNKLEAEADS (91 aa)) is the K-box domain. The segment at 228-249 (ANPRSNGGGGDQNNNFVMGWPL) is disordered.

May interact with the K-box of MADS6. In terms of tissue distribution, expressed in the floral meristem, lodicule, palea, lemma, receptacle, empty glume, stamen, pistil, and ovule.

It localises to the nucleus. Functionally, probable transcription factor. Plays minor but redundant roles with MADS6 in floral development. This is MADS-box transcription factor 17 (MADS17) from Oryza sativa subsp. japonica (Rice).